The following is a 311-amino-acid chain: 4-hydroxy-3-methylbut-2-enyl diphosphate reductase (311 aa).

Cys-14 contacts [4Fe-4S] cluster. Residues His-43 and His-76 each contribute to the (2E)-4-hydroxy-3-methylbut-2-enyl diphosphate site. His-43 and His-76 together coordinate dimethylallyl diphosphate. The isopentenyl diphosphate site is built by His-43 and His-76. Cys-98 serves as a coordination point for [4Fe-4S] cluster. His-126 is a binding site for (2E)-4-hydroxy-3-methylbut-2-enyl diphosphate. A dimethylallyl diphosphate-binding site is contributed by His-126. His-126 is a binding site for isopentenyl diphosphate. Glu-128 functions as the Proton donor in the catalytic mechanism. Position 166 (Thr-166) interacts with (2E)-4-hydroxy-3-methylbut-2-enyl diphosphate. Cys-196 is a [4Fe-4S] cluster binding site. Positions 224, 225, 226, and 268 each coordinate (2E)-4-hydroxy-3-methylbut-2-enyl diphosphate. Dimethylallyl diphosphate-binding residues include Ser-224, Ser-225, Asn-226, and Ser-268. Isopentenyl diphosphate contacts are provided by Ser-224, Ser-225, Asn-226, and Ser-268.

This sequence belongs to the IspH family. [4Fe-4S] cluster serves as cofactor.

The catalysed reaction is isopentenyl diphosphate + 2 oxidized [2Fe-2S]-[ferredoxin] + H2O = (2E)-4-hydroxy-3-methylbut-2-enyl diphosphate + 2 reduced [2Fe-2S]-[ferredoxin] + 2 H(+). It catalyses the reaction dimethylallyl diphosphate + 2 oxidized [2Fe-2S]-[ferredoxin] + H2O = (2E)-4-hydroxy-3-methylbut-2-enyl diphosphate + 2 reduced [2Fe-2S]-[ferredoxin] + 2 H(+). Its pathway is isoprenoid biosynthesis; dimethylallyl diphosphate biosynthesis; dimethylallyl diphosphate from (2E)-4-hydroxy-3-methylbutenyl diphosphate: step 1/1. It functions in the pathway isoprenoid biosynthesis; isopentenyl diphosphate biosynthesis via DXP pathway; isopentenyl diphosphate from 1-deoxy-D-xylulose 5-phosphate: step 6/6. Functionally, catalyzes the conversion of 1-hydroxy-2-methyl-2-(E)-butenyl 4-diphosphate (HMBPP) into a mixture of isopentenyl diphosphate (IPP) and dimethylallyl diphosphate (DMAPP). Acts in the terminal step of the DOXP/MEP pathway for isoprenoid precursor biosynthesis. The polypeptide is 4-hydroxy-3-methylbut-2-enyl diphosphate reductase (Chromobacterium violaceum (strain ATCC 12472 / DSM 30191 / JCM 1249 / CCUG 213 / NBRC 12614 / NCIMB 9131 / NCTC 9757 / MK)).